The primary structure comprises 867 residues: Glucans biosynthesis glucosyltransferase H (867 aa).

The interval 71 to 91 is disordered; the sequence is DDEGRTQLETMPKATRSSISP. The next 6 helical transmembrane spans lie at 139 to 156, 194 to 216, 518 to 540, 568 to 590, 603 to 625, and 680 to 702; these read YILL…TWYM, ILIL…LMGF, VMSY…LQVV, IALL…LLIW, VTIS…MLFH, and FLFW…VFSS.

It belongs to the glycosyltransferase 2 family. OpgH subfamily.

Its subcellular location is the cell inner membrane. It participates in glycan metabolism; osmoregulated periplasmic glucan (OPG) biosynthesis. Its function is as follows. Involved in the biosynthesis of osmoregulated periplasmic glucans (OPGs). This is Glucans biosynthesis glucosyltransferase H from Nitrosomonas europaea (strain ATCC 19718 / CIP 103999 / KCTC 2705 / NBRC 14298).